Consider the following 360-residue polypeptide: Phosphoserine aminotransferase (360 aa).

Arg41 is an L-glutamate binding site. Pyridoxal 5'-phosphate-binding residues include Trp101, Thr152, Asp172, and Gln195. N6-(pyridoxal phosphate)lysine is present on Lys196. A pyridoxal 5'-phosphate-binding site is contributed by 237-238 (NT).

The protein belongs to the class-V pyridoxal-phosphate-dependent aminotransferase family. SerC subfamily. As to quaternary structure, homodimer. The cofactor is pyridoxal 5'-phosphate.

It is found in the cytoplasm. It catalyses the reaction O-phospho-L-serine + 2-oxoglutarate = 3-phosphooxypyruvate + L-glutamate. It carries out the reaction 4-(phosphooxy)-L-threonine + 2-oxoglutarate = (R)-3-hydroxy-2-oxo-4-phosphooxybutanoate + L-glutamate. It functions in the pathway amino-acid biosynthesis; L-serine biosynthesis; L-serine from 3-phospho-D-glycerate: step 2/3. Its pathway is cofactor biosynthesis; pyridoxine 5'-phosphate biosynthesis; pyridoxine 5'-phosphate from D-erythrose 4-phosphate: step 3/5. Its function is as follows. Catalyzes the reversible conversion of 3-phosphohydroxypyruvate to phosphoserine and of 3-hydroxy-2-oxo-4-phosphonooxybutanoate to phosphohydroxythreonine. The sequence is that of Phosphoserine aminotransferase from Burkholderia orbicola (strain MC0-3).